Here is a 509-residue protein sequence, read N- to C-terminus: Heat shock 70 kDa protein 14-A (509 aa).

Belongs to the heat shock protein 70 family. Component of ribosome-associated complex (RAC).

It is found in the cytoplasm. Its subcellular location is the cytosol. Its function is as follows. Component of the ribosome-associated complex (RAC), a complex involved in folding or maintaining nascent polypeptides in a folding-competent state. The sequence is that of Heat shock 70 kDa protein 14-A (hspa14-a) from Xenopus laevis (African clawed frog).